The primary structure comprises 71 residues: Putative antitoxin VapB14 (71 aa).

In terms of biological role, putative antitoxin component of a possible type II toxin-antitoxin (TA) system. The cognate toxin is VapB14. This Mycobacterium tuberculosis (strain ATCC 25618 / H37Rv) protein is Putative antitoxin VapB14 (vapB14).